Reading from the N-terminus, the 834-residue chain is Glycerol-3-phosphate acyltransferase (834 aa).

An HXXXXD motif motif is present at residues 309–314 (CHRSHI).

The protein belongs to the GPAT/DAPAT family.

Its subcellular location is the cell inner membrane. The catalysed reaction is sn-glycerol 3-phosphate + an acyl-CoA = a 1-acyl-sn-glycero-3-phosphate + CoA. Its pathway is phospholipid metabolism; CDP-diacylglycerol biosynthesis; CDP-diacylglycerol from sn-glycerol 3-phosphate: step 1/3. This Pseudomonas paraeruginosa (strain DSM 24068 / PA7) (Pseudomonas aeruginosa (strain PA7)) protein is Glycerol-3-phosphate acyltransferase.